A 143-amino-acid polypeptide reads, in one-letter code: Large ribosomal subunit protein uL11 (143 aa).

Belongs to the universal ribosomal protein uL11 family. As to quaternary structure, part of the ribosomal stalk of the 50S ribosomal subunit. Interacts with L10 and the large rRNA to form the base of the stalk. L10 forms an elongated spine to which L12 dimers bind in a sequential fashion forming a multimeric L10(L12)X complex. Post-translationally, one or more lysine residues are methylated.

In terms of biological role, forms part of the ribosomal stalk which helps the ribosome interact with GTP-bound translation factors. The protein is Large ribosomal subunit protein uL11 of Polynucleobacter necessarius subsp. necessarius (strain STIR1).